We begin with the raw amino-acid sequence, 241 residues long: Adapter protein MecA (241 aa).

Residues 77 to 102 (KNTDEDDVADESQGDASVDSEHPDQV) form a disordered region. Acidic residues predominate over residues 80-89 (DEDDVADESQ).

The protein belongs to the MecA family. In terms of assembly, homodimer.

Its function is as follows. Enables the recognition and targeting of unfolded and aggregated proteins to the ClpC protease or to other proteins involved in proteolysis. This chain is Adapter protein MecA, found in Levilactobacillus brevis (strain ATCC 367 / BCRC 12310 / CIP 105137 / JCM 1170 / LMG 11437 / NCIMB 947 / NCTC 947) (Lactobacillus brevis).